The primary structure comprises 625 residues: PTS system beta-glucoside-specific EIIBCA component (625 aa).

The PTS EIIB type-1 domain maps to 1–84 (MTELARKIVA…NSVAGLDEKA (84 aa)). Residues 1–99 (MTELARKIVA…NDDKGNLLNR (99 aa)) are Periplasmic-facing. Residue cysteine 24 is the Phosphocysteine intermediate; for EIIB activity of the active site. Residues 100–120 (FVYVISGIFTPLIGLMAATGI) form a helical membrane-spanning segment. The PTS EIIC type-1 domain occupies 102-465 (YVISGIFTPL…RQPAQGAPQE (364 aa)). Topologically, residues 121–140 (LKGMLALALTFQWTTEQSGT) are cytoplasmic. The helical transmembrane segment at 141-161 (YLILFSASDALFWFFPIILGY) threads the bilayer. Residues 162–166 (TAGKR) lie on the Periplasmic side of the membrane. The chain crosses the membrane as a helical span at residues 167–187 (FGGNPFTAMVIGGALVHPLIL). Residues 188 to 202 (TAFENGQKADALGLD) lie on the Cytoplasmic side of the membrane. A helical transmembrane segment spans residues 203-223 (FLGIPVTLLNYSSSVIPIIFS). Residues 224-244 (AWLCSILERRLNAWLPSAIKN) lie on the Periplasmic side of the membrane. The helical transmembrane segment at 245 to 265 (FFTPLLCLMVITPVTFLLVGP) threads the bilayer. The Cytoplasmic segment spans residues 266–284 (LSTWISELIAAGYLWLYQA). Residues 285–305 (VPAFAGAVMGGFWQIFVMFGL) form a helical membrane-spanning segment. At 306-324 (HWGLVPLCINNFTVLGYDT) the chain is on the periplasmic side. A helical membrane pass occupies residues 325–345 (MIPLLMPAIMAQVGAALGVFL). Over 346–353 (CERDAQKK) the chain is Cytoplasmic. The helical transmembrane segment at 354 to 374 (VVAGSAALTSLFGITEPAVYG) threads the bilayer. Topologically, residues 375–380 (VNLPRK) are periplasmic. Residues 381-401 (YPFVIACISGALGATIIGYAQ) traverse the membrane as a helical segment. Topologically, residues 402–403 (TK) are cytoplasmic. The chain crosses the membrane as a helical span at residues 404-424 (VYSFGLPSIFTFMQTIPSTGI). Over 425–431 (DFTVWAS) the chain is Periplasmic. Residues 432-452 (VIGGVIAIGCAFVGTVMLHFI) form a helical membrane-spanning segment. Over 453–625 (TAKRQPAQGA…AGEPLLSIIR (173 aa)) the chain is Cytoplasmic. The PTS EIIA type-1 domain occupies 495–599 (DTTFASGLLG…DLTTPVLISN (105 aa)). The active-site Tele-phosphohistidine intermediate; for EIIA activity is the histidine 547.

Its subcellular location is the cell inner membrane. Functionally, the phosphoenolpyruvate-dependent sugar phosphotransferase system (sugar PTS), a major carbohydrate active -transport system, catalyzes the phosphorylation of incoming sugar substrates concomitantly with their translocation across the cell membrane. This system is involved in beta-glucoside transport. In terms of biological role, acts both as a kinase and as a phosphatase on BglG. The chain is PTS system beta-glucoside-specific EIIBCA component (bglF) from Escherichia coli (strain K12).